Reading from the N-terminus, the 263-residue chain is 3-methyl-2-oxobutanoate hydroxymethyltransferase (263 aa).

Mg(2+)-binding residues include Asp-45 and Asp-84. Residues 45–46 (DS), Asp-84, and Lys-112 each bind 3-methyl-2-oxobutanoate. Glu-114 contributes to the Mg(2+) binding site. Glu-181 acts as the Proton acceptor in catalysis.

This sequence belongs to the PanB family. Homodecamer; pentamer of dimers. Mg(2+) serves as cofactor.

Its subcellular location is the cytoplasm. It catalyses the reaction 3-methyl-2-oxobutanoate + (6R)-5,10-methylene-5,6,7,8-tetrahydrofolate + H2O = 2-dehydropantoate + (6S)-5,6,7,8-tetrahydrofolate. Its pathway is cofactor biosynthesis; (R)-pantothenate biosynthesis; (R)-pantoate from 3-methyl-2-oxobutanoate: step 1/2. Catalyzes the reversible reaction in which hydroxymethyl group from 5,10-methylenetetrahydrofolate is transferred onto alpha-ketoisovalerate to form ketopantoate. In Photorhabdus laumondii subsp. laumondii (strain DSM 15139 / CIP 105565 / TT01) (Photorhabdus luminescens subsp. laumondii), this protein is 3-methyl-2-oxobutanoate hydroxymethyltransferase.